Reading from the N-terminus, the 84-residue chain is UPF0291 protein SMU_447 (84 aa).

The segment at 57–84 (EGNDITPAKLKEIQRQKGIHGRKPEDNS) is disordered.

This sequence belongs to the UPF0291 family.

The protein resides in the cytoplasm. This is UPF0291 protein SMU_447 from Streptococcus mutans serotype c (strain ATCC 700610 / UA159).